A 159-amino-acid chain; its full sequence is 2-C-methyl-D-erythritol 2,4-cyclodiphosphate synthase (159 aa).

Aspartate 10 and histidine 12 together coordinate a divalent metal cation. 4-CDP-2-C-methyl-D-erythritol 2-phosphate-binding positions include 10 to 12 (DVH) and 37 to 38 (HS). Residue histidine 45 coordinates a divalent metal cation. 4-CDP-2-C-methyl-D-erythritol 2-phosphate contacts are provided by residues 59–61 (DIG), 64–68 (FPDTD), 103–109 (AQAPKML), 135–138 (TTTE), phenylalanine 142, and arginine 145.

It belongs to the IspF family. In terms of assembly, homotrimer. A divalent metal cation is required as a cofactor.

The enzyme catalyses 4-CDP-2-C-methyl-D-erythritol 2-phosphate = 2-C-methyl-D-erythritol 2,4-cyclic diphosphate + CMP. The protein operates within isoprenoid biosynthesis; isopentenyl diphosphate biosynthesis via DXP pathway; isopentenyl diphosphate from 1-deoxy-D-xylulose 5-phosphate: step 4/6. Functionally, involved in the biosynthesis of isopentenyl diphosphate (IPP) and dimethylallyl diphosphate (DMAPP), two major building blocks of isoprenoid compounds. Catalyzes the conversion of 4-diphosphocytidyl-2-C-methyl-D-erythritol 2-phosphate (CDP-ME2P) to 2-C-methyl-D-erythritol 2,4-cyclodiphosphate (ME-CPP) with a corresponding release of cytidine 5-monophosphate (CMP). The polypeptide is 2-C-methyl-D-erythritol 2,4-cyclodiphosphate synthase (Francisella tularensis subsp. novicida (strain U112)).